The chain runs to 143 residues: Glycine cleavage system H protein 1 (143 aa).

The Lipoyl-binding domain maps to 26 to 107 (IYSVGMASIL…PYSSWIAKLK (82 aa)). Lys-67 is modified (N6-lipoyllysine).

Belongs to the GcvH family. As to quaternary structure, the glycine cleavage system is composed of four proteins: P, T, L and H. The cofactor is (R)-lipoate.

In terms of biological role, the glycine cleavage system catalyzes the degradation of glycine. The H protein shuttles the methylamine group of glycine from the P protein to the T protein. In Aquifex aeolicus (strain VF5), this protein is Glycine cleavage system H protein 1.